The sequence spans 218 residues: uncharacterized protein (218 aa).

A run of 5 helical transmembrane segments spans residues 27–49 (IALENAGIPIPGETITLLGGFLA), 57–77 (GGVLIAAIAGAVLGDSCGYWV), 115–135 (VFFGRFVTLLRIFAGPMAGIV), 142–162 (FLLYNIGGASVWAAITVSLAY), and 180–200 (FSWFALAAVVGMVGIYFVFHF).

This sequence belongs to the DedA family.

It localises to the cell membrane. This is an uncharacterized protein from Synechocystis sp. (strain ATCC 27184 / PCC 6803 / Kazusa).